Reading from the N-terminus, the 188-residue chain is MIKALVGLGNPGPKYKDTKHNIGFKVIDEVAFKLHLKNPLEKYMSIVFHIKEQDIYLIKPQTFMNNSGIALRQFVEKTKIAPSDILVIYDDMDLPIGTIKMKPNGGSGGHNGVESIIRELRTQEFPRLRIGIGRPASKEEVTNYVLSPFEYKDTPIVKKTIEKASEYAIRSLEEPLEYVMTLCNTKSS.

Tyr-15 is a binding site for tRNA. His-20 functions as the Proton acceptor in the catalytic mechanism. TRNA-binding residues include Phe-63, Asn-65, and Asn-111.

The protein belongs to the PTH family. Monomer.

The protein resides in the cytoplasm. The catalysed reaction is an N-acyl-L-alpha-aminoacyl-tRNA + H2O = an N-acyl-L-amino acid + a tRNA + H(+). In terms of biological role, hydrolyzes ribosome-free peptidyl-tRNAs (with 1 or more amino acids incorporated), which drop off the ribosome during protein synthesis, or as a result of ribosome stalling. Functionally, catalyzes the release of premature peptidyl moieties from peptidyl-tRNA molecules trapped in stalled 50S ribosomal subunits, and thus maintains levels of free tRNAs and 50S ribosomes. In Hydrogenobaculum sp. (strain Y04AAS1), this protein is Peptidyl-tRNA hydrolase.